The following is a 311-amino-acid chain: Methionyl-tRNA formyltransferase (311 aa).

Position 112 to 115 (112 to 115 (SLLP)) interacts with (6S)-5,6,7,8-tetrahydrofolate.

It belongs to the Fmt family.

It carries out the reaction L-methionyl-tRNA(fMet) + (6R)-10-formyltetrahydrofolate = N-formyl-L-methionyl-tRNA(fMet) + (6S)-5,6,7,8-tetrahydrofolate + H(+). Attaches a formyl group to the free amino group of methionyl-tRNA(fMet). The formyl group appears to play a dual role in the initiator identity of N-formylmethionyl-tRNA by promoting its recognition by IF2 and preventing the misappropriation of this tRNA by the elongation apparatus. This chain is Methionyl-tRNA formyltransferase, found in Geobacter metallireducens (strain ATCC 53774 / DSM 7210 / GS-15).